The following is a 215-amino-acid chain: Chaperone protein TorD (215 aa).

The protein belongs to the TorD/DmsD family. TorD subfamily.

The protein localises to the cytoplasm. Involved in the biogenesis of TorA. Acts on TorA before the insertion of the molybdenum cofactor and, as a result, probably favors a conformation of the apoenzyme that is competent for acquiring the cofactor. This Vibrio parahaemolyticus serotype O3:K6 (strain RIMD 2210633) protein is Chaperone protein TorD.